Reading from the N-terminus, the 475-residue chain is Trifunctional enzyme subunit beta, mitochondrial (475 aa).

A mitochondrion-targeting transit peptide spans 1–34 (MTTILTYPFKNLPTASKWALRFSIRPLSCSSQLR). Position 73 is an N6-acetyllysine; alternate (Lys-73). At Lys-73 the chain carries N6-succinyllysine; alternate. Cys-139 functions as the Acyl-thioester intermediate in the catalytic mechanism. The stretch at 174 to 221 (IRHSRKMRKLMLDLNKAKSMGQRLSLISKFRFNFLAPELPAVSEFSTS) is an intramembrane region. An N6-acetyllysine; alternate modification is found at Lys-189. The residue at position 189 (Lys-189) is an N6-succinyllysine; alternate. An N6-succinyllysine mark is found at Lys-191, Lys-273, and Lys-292. Lys-294 is subject to N6-acetyllysine; alternate. The residue at position 294 (Lys-294) is an N6-succinyllysine; alternate. Lys-299 carries the N6-acetyllysine modification. Lys-333 carries the post-translational modification N6-acetyllysine; alternate. Lys-333 is modified (N6-succinyllysine; alternate). N6-acetyllysine occurs at positions 349 and 362. Cys-459 (proton donor/acceptor) is an active-site residue.

It belongs to the thiolase-like superfamily. Thiolase family. Heterotetramer of 2 alpha/HADHA and 2 beta/HADHB subunits; forms the mitochondrial trifunctional enzyme. Also purified as higher order heterooligomers including a 4 alpha/HADHA and 4 beta/HADHB heterooligomer which physiological significance remains unclear. The mitochondrial trifunctional enzyme interacts with MTLN. Interacts with RSAD2/viperin.

The protein localises to the mitochondrion. It localises to the mitochondrion inner membrane. The protein resides in the mitochondrion outer membrane. Its subcellular location is the endoplasmic reticulum. It catalyses the reaction an acyl-CoA + acetyl-CoA = a 3-oxoacyl-CoA + CoA. The enzyme catalyses butanoyl-CoA + acetyl-CoA = 3-oxohexanoyl-CoA + CoA. The catalysed reaction is hexanoyl-CoA + acetyl-CoA = 3-oxooctanoyl-CoA + CoA. It carries out the reaction octanoyl-CoA + acetyl-CoA = 3-oxodecanoyl-CoA + CoA. It catalyses the reaction decanoyl-CoA + acetyl-CoA = 3-oxododecanoyl-CoA + CoA. The enzyme catalyses dodecanoyl-CoA + acetyl-CoA = 3-oxotetradecanoyl-CoA + CoA. The catalysed reaction is tetradecanoyl-CoA + acetyl-CoA = 3-oxohexadecanoyl-CoA + CoA. The protein operates within lipid metabolism; fatty acid beta-oxidation. Mitochondrial trifunctional enzyme catalyzes the last three of the four reactions of the mitochondrial beta-oxidation pathway. The mitochondrial beta-oxidation pathway is the major energy-producing process in tissues and is performed through four consecutive reactions breaking down fatty acids into acetyl-CoA. Among the enzymes involved in this pathway, the trifunctional enzyme exhibits specificity for long-chain fatty acids. Mitochondrial trifunctional enzyme is a heterotetrameric complex composed of two proteins, the trifunctional enzyme subunit alpha/HADHA carries the 2,3-enoyl-CoA hydratase and the 3-hydroxyacyl-CoA dehydrogenase activities, while the trifunctional enzyme subunit beta/HADHB described here bears the 3-ketoacyl-CoA thiolase activity. In Pan troglodytes (Chimpanzee), this protein is Trifunctional enzyme subunit beta, mitochondrial (HADHB).